The following is an 820-amino-acid chain: Chitinase A (820 aa).

The signal sequence occupies residues 1 to 21 (MKLNKITSYIGFALLSGGALA). In terms of domain architecture, GH18 spans 158-588 (RVTGAYFVEW…NAMYDGLTAG (431 aa)). Residue glutamate 313 is the Proton donor of the active site.

It belongs to the glycosyl hydrolase 18 family. Chitinase class II subfamily.

It catalyses the reaction Random endo-hydrolysis of N-acetyl-beta-D-glucosaminide (1-&gt;4)-beta-linkages in chitin and chitodextrins.. Its activity is regulated as follows. Stimulated by magnesium ions; inhibited by N-bromosuccinimide and 2-hydroxy-5-nitrobenzyl bromide. This chain is Chitinase A (chiA), found in Pseudoalteromonas piscicida.